The primary structure comprises 216 residues: Uracil phosphoribosyltransferase (216 aa).

5-phospho-alpha-D-ribose 1-diphosphate-binding positions include R85, R110, and 136-144; that span reads DPMLATGNS. Uracil-binding positions include I201 and 206 to 208; that span reads GDA. D207 provides a ligand contact to 5-phospho-alpha-D-ribose 1-diphosphate.

Belongs to the UPRTase family. Requires Mg(2+) as cofactor.

The enzyme catalyses UMP + diphosphate = 5-phospho-alpha-D-ribose 1-diphosphate + uracil. Its pathway is pyrimidine metabolism; UMP biosynthesis via salvage pathway; UMP from uracil: step 1/1. Allosterically activated by GTP. Functionally, catalyzes the conversion of uracil and 5-phospho-alpha-D-ribose 1-diphosphate (PRPP) to UMP and diphosphate. This chain is Uracil phosphoribosyltransferase, found in Rhodospirillum centenum (strain ATCC 51521 / SW).